The following is a 174-amino-acid chain: Peptidyl-prolyl cis-trans isomerase-like 1 (174 aa).

Residues 5–159 (SPTYVTFDTS…EEIKIHRARL (155 aa)) enclose the PPIase cyclophilin-type domain.

It belongs to the cyclophilin-type PPIase family. PPIL1 subfamily.

It catalyses the reaction [protein]-peptidylproline (omega=180) = [protein]-peptidylproline (omega=0). PPIases accelerate the folding of proteins. It catalyzes the cis-trans isomerization of proline imidic peptide bonds in oligopeptides. In Cryptococcus neoformans var. neoformans serotype D (strain B-3501A) (Filobasidiella neoformans), this protein is Peptidyl-prolyl cis-trans isomerase-like 1 (CYP1).